A 984-amino-acid polypeptide reads, in one-letter code: PAX-interacting protein 1 (984 aa).

BRCT domains follow at residues 8 to 93 and 94 to 183; these read VPEE…GFSP and ESCQ…LYHP. Residues 94–183 are interaction with PAGR1; it reads ESCQIFFGIT…TRKDEALYHP (90 aa). 2 disordered regions span residues 187–271 and 417–509; these read VYEE…PAEV and QQHL…LFGH. Residues 188-208 are compositionally biased toward acidic residues; it reads YEEEEEEEEEEEGAGNEEPDS. The span at 217-229 shows a compositional bias: low complexity; it reads KSSPASSQEGSPS. Phosphoserine is present on residues S227 and S235. Residues 424-454 are compositionally biased toward pro residues; sequence PYPPPPPHPFPPPPAHPHQFPQPPLQRPQPP. Over residues 455–485 the composition is skewed to low complexity; sequence LQQQQLSHLQQQQLQHLQRLQQMQPTPTAQL. Positions 486-499 are enriched in pro residues; it reads PGPPAQALQPPPPQ. Residues 505–984 are interaction with TP53BP1; it reads PLFGHDPAVE…TLDYESYKFN (480 aa). 2 consecutive BRCT domains span residues 516-609 and 616-704; these read PEEG…RALH and PGGK…TQYG. Positions 583–600 match the Nuclear localization signal motif; that stretch reads RKRCITAHWLNTVLKKKK. The disordered stretch occupies residues 750-771; the sequence is KQNEVTNVQPSSKRARIEDIPP. The span at 752 to 761 shows a compositional bias: polar residues; the sequence is NEVTNVQPSS. 2 consecutive BRCT domains span residues 781-862 and 883-924; these read TPFV…NYLL and HASP…QPSF.

Interacts with the C-terminal transactivation domain of PAX2. Forms a constitutive complex with PAGR1 independently of the MLL2/MLL3 complex. Interacts with TP53BP1 (when phosphorylated at the N-terminus by ATM). Interacts with HLTF. Component of the KMT2 family MLL2/MLL3 complex (also named ASCOM complex), at least composed of the HMTs KMT2D and/or KMT2C, the common subunits ASH2L, RBBP5, WDR5 and DPY30, and the complex type-specific subunits PAXIP1/PTIP, PAGR1, NCOA6 and KDM6A; required for the association of PAGR1 with the MLL2/MLL3 complex. Interacts with NUPR1; this interaction prevents PAXIP1 inhibition of PAX2 transcription factor activity.

It is found in the nucleus matrix. The protein resides in the chromosome. Involved in DNA damage response and in transcriptional regulation through histone methyltransferase (HMT) complexes. Plays a role in early development. In DNA damage response is required for cell survival after ionizing radiation. In vitro shown to be involved in the homologous recombination mechanism for the repair of double-strand breaks (DSBs). Its localization to DNA damage foci requires RNF8 and UBE2N. Recruits TP53BP1 to DNA damage foci and, at least in particular repair processes, effective DNA damage response appears to require the association with TP53BP1 phosphorylated by ATM at 'Ser-25'. Together with TP53BP1 regulates ATM association. Proposed to recruit PAGR1 to sites of DNA damage and the PAGR1:PAXIP1 complex is required for cell survival in response to DNA damage; the function is probably independent of MLL-containing histone methyltransferase (HMT) complexes. However, this function has been questioned. Promotes ubiquitination of PCNA following UV irradiation and may regulate recruitment of polymerase eta and RAD51 to chromatin after DNA damage. Proposed to be involved in transcriptional regulation by linking MLL-containing histone methyltransferase (HMT) complexes to gene promoters by interacting with promoter-bound transcription factors such as PAX2. Associates with gene promoters that are known to be regulated by KMT2D/MLL2. During immunoglobulin class switching in activated B-cells is involved in trimethylation of histone H3 at 'Lys-4' and in transcription initiation of downstream switch regions at the immunoglobulin heavy-chain (Igh) locus; this function appears to involve the recruitment of MLL-containing HMT complexes. Conflictingly, its function in transcriptional regulation during immunoglobulin class switching is reported to be independent of the MLL2/MLL3 complex. This Bos taurus (Bovine) protein is PAX-interacting protein 1 (PAXIP1).